The sequence spans 186 residues: Ribulose bisphosphate carboxylase small subunit, chloroplastic 6 (186 aa).

Residues 1–60 (MASSMLSNAAVATTAASRSAGAQASMVAPFTGLKSVSAFPVTRKSSNDLSTVPSNGGKVQ) constitute a chloroplast transit peptide.

It belongs to the RuBisCO small chain family. In terms of assembly, heterohexadecamer of 8 large and 8 small subunits.

It is found in the plastid. It localises to the chloroplast. In terms of biological role, ruBisCO catalyzes two reactions: the carboxylation of D-ribulose 1,5-bisphosphate, the primary event in carbon dioxide fixation, as well as the oxidative fragmentation of the pentose substrate. Both reactions occur simultaneously and in competition at the same active site. Although the small subunit is not catalytic it is essential for maximal activity. The sequence is that of Ribulose bisphosphate carboxylase small subunit, chloroplastic 6 from Mesembryanthemum crystallinum (Common ice plant).